A 425-amino-acid polypeptide reads, in one-letter code: Serine--tRNA ligase (425 aa).

Residue 233–235 (TAE) participates in L-serine binding. 264 to 266 (RRE) is a binding site for ATP. Residue E287 participates in L-serine binding. ATP is bound at residue 351–354 (EISS). Residue S385 coordinates L-serine.

This sequence belongs to the class-II aminoacyl-tRNA synthetase family. Type-1 seryl-tRNA synthetase subfamily. As to quaternary structure, homodimer. The tRNA molecule binds across the dimer.

The protein localises to the cytoplasm. The catalysed reaction is tRNA(Ser) + L-serine + ATP = L-seryl-tRNA(Ser) + AMP + diphosphate + H(+). It carries out the reaction tRNA(Sec) + L-serine + ATP = L-seryl-tRNA(Sec) + AMP + diphosphate + H(+). It participates in aminoacyl-tRNA biosynthesis; selenocysteinyl-tRNA(Sec) biosynthesis; L-seryl-tRNA(Sec) from L-serine and tRNA(Sec): step 1/1. Functionally, catalyzes the attachment of serine to tRNA(Ser). Is also able to aminoacylate tRNA(Sec) with serine, to form the misacylated tRNA L-seryl-tRNA(Sec), which will be further converted into selenocysteinyl-tRNA(Sec). This Prochlorococcus marinus (strain SARG / CCMP1375 / SS120) protein is Serine--tRNA ligase.